The sequence spans 365 residues: tRNA(Met) cytidine acetate ligase (365 aa).

ATP-binding positions include 7-20, Gly96, Asn152, and Arg175; that span reads IAEF…HKYL.

It belongs to the TmcAL family.

It is found in the cytoplasm. It carries out the reaction cytidine(34) in elongator tRNA(Met) + acetate + ATP = N(4)-acetylcytidine(34) in elongator tRNA(Met) + AMP + diphosphate. Its function is as follows. Catalyzes the formation of N(4)-acetylcytidine (ac(4)C) at the wobble position of elongator tRNA(Met), using acetate and ATP as substrates. First activates an acetate ion to form acetyladenylate (Ac-AMP) and then transfers the acetyl group to tRNA to form ac(4)C34. The chain is tRNA(Met) cytidine acetate ligase from Streptococcus pneumoniae (strain JJA).